The following is a 342-amino-acid chain: tRNA dimethylallyltransferase (342 aa).

The interval 1–30 (MSANGPAAEPADGGRAVPAGGGEAVPAGGG) is disordered. Residues 19–30 (AGGGEAVPAGGG) show a composition bias toward gly residues. 49–56 (GPTAAGKS) is a binding site for ATP. A substrate-binding site is contributed by 51-56 (TAAGKS). The segment at 74–77 (DSMQ) is interaction with substrate tRNA.

It belongs to the IPP transferase family. As to quaternary structure, monomer. Mg(2+) serves as cofactor.

The enzyme catalyses adenosine(37) in tRNA + dimethylallyl diphosphate = N(6)-dimethylallyladenosine(37) in tRNA + diphosphate. Functionally, catalyzes the transfer of a dimethylallyl group onto the adenine at position 37 in tRNAs that read codons beginning with uridine, leading to the formation of N6-(dimethylallyl)adenosine (i(6)A). This is tRNA dimethylallyltransferase from Salinispora arenicola (strain CNS-205).